The chain runs to 452 residues: Pup--protein ligase (452 aa).

Mg(2+) is bound at residue Glu-9. Arg-53 is an ATP binding site. A Mg(2+)-binding site is contributed by Tyr-55. Residue Asp-57 is the Proton acceptor of the active site. Glu-63 serves as a coordination point for Mg(2+). 2 residues coordinate ATP: Thr-66 and Trp-419.

The protein belongs to the Pup ligase/Pup deamidase family. Pup-conjugating enzyme subfamily.

The enzyme catalyses ATP + [prokaryotic ubiquitin-like protein]-L-glutamate + [protein]-L-lysine = ADP + phosphate + N(6)-([prokaryotic ubiquitin-like protein]-gamma-L-glutamyl)-[protein]-L-lysine.. It participates in protein degradation; proteasomal Pup-dependent pathway. The protein operates within protein modification; protein pupylation. In terms of biological role, catalyzes the covalent attachment of the prokaryotic ubiquitin-like protein modifier Pup to the proteasomal substrate proteins, thereby targeting them for proteasomal degradation. This tagging system is termed pupylation. The ligation reaction involves the side-chain carboxylate of the C-terminal glutamate of Pup and the side-chain amino group of a substrate lysine. In Nocardia farcinica (strain IFM 10152), this protein is Pup--protein ligase.